The sequence spans 368 residues: 4-hydroxy-3-methylbut-2-en-1-yl diphosphate synthase (flavodoxin) (368 aa).

[4Fe-4S] cluster-binding residues include Cys-271, Cys-274, Cys-306, and Glu-313.

This sequence belongs to the IspG family. The cofactor is [4Fe-4S] cluster.

The catalysed reaction is (2E)-4-hydroxy-3-methylbut-2-enyl diphosphate + oxidized [flavodoxin] + H2O + 2 H(+) = 2-C-methyl-D-erythritol 2,4-cyclic diphosphate + reduced [flavodoxin]. Its pathway is isoprenoid biosynthesis; isopentenyl diphosphate biosynthesis via DXP pathway; isopentenyl diphosphate from 1-deoxy-D-xylulose 5-phosphate: step 5/6. In terms of biological role, converts 2C-methyl-D-erythritol 2,4-cyclodiphosphate (ME-2,4cPP) into 1-hydroxy-2-methyl-2-(E)-butenyl 4-diphosphate. This chain is 4-hydroxy-3-methylbut-2-en-1-yl diphosphate synthase (flavodoxin), found in Haemophilus influenzae (strain PittGG).